Reading from the N-terminus, the 351-residue chain is Beta-1,4-xylosyltransferase IRX9 (351 aa).

The Cytoplasmic portion of the chain corresponds to 1 to 16; sequence MGSLERSKKKAQVWKK. The helical; Signal-anchor for type II membrane protein transmembrane segment at 17–36 threads the bilayer; that stretch reads AVIHFSLCFVMGFFTGFAPA. Residues 37–351 lie on the Lumenal side of the membrane; that stretch reads GKASFFSNFE…KFPTRTRLST (315 aa). 2 N-linked (GlcNAc...) asparagine glycosylation sites follow: Asn64 and Asn74. Residues 80 to 107 form a disordered region; it reads SQSQAPAPAESREAEGETRSLSEKEDEN. The span at 89-107 shows a compositional bias: basic and acidic residues; that stretch reads ESREAEGETRSLSEKEDEN. N-linked (GlcNAc...) asparagine glycans are attached at residues Asn271 and Asn287.

It belongs to the glycosyltransferase 43 family. In terms of tissue distribution, expressed in developing interfascicular fibers, primary and secondary xylem in stems and developing secondary xylem in roots.

It is found in the golgi apparatus membrane. It catalyses the reaction [(1-&gt;4)-beta-D-xylan](n) + UDP-alpha-D-xylose = [(1-&gt;4)-beta-D-xylan](n+1) + UDP + H(+). Involved in the synthesis of the hemicellulose glucuronoxylan, a major component of secondary cell walls. Xylan xylosyltransferase that acts cooperatively with IRX14 to achieve the successive addition of xylosyl residues during xylan backbone elongation. The polypeptide is Beta-1,4-xylosyltransferase IRX9 (Arabidopsis thaliana (Mouse-ear cress)).